Consider the following 193-residue polypeptide: Molybdopterin synthase catalytic subunit (193 aa).

Residues 118–119 (HR), K134, and 141–143 (KKE) contribute to the substrate site. A disordered region spans residues 159-193 (DRTTTDGTTASSPAPATRPAKGGGCCGSKVRANES). Over residues 163–178 (TDGTTASSPAPATRPA) the composition is skewed to low complexity.

Belongs to the MoaE family. MOCS2B subfamily. In terms of assembly, heterotetramer; composed of 2 small (MOCS2A) and 2 large (MOCS2B) subunits.

The protein resides in the cytoplasm. It carries out the reaction 2 [molybdopterin-synthase sulfur-carrier protein]-C-terminal-Gly-aminoethanethioate + cyclic pyranopterin phosphate + H2O = molybdopterin + 2 [molybdopterin-synthase sulfur-carrier protein]-C-terminal Gly-Gly + 2 H(+). It participates in cofactor biosynthesis; molybdopterin biosynthesis. Catalytic subunit of the molybdopterin synthase complex, a complex that catalyzes the conversion of precursor Z into molybdopterin. Acts by mediating the incorporation of 2 sulfur atoms from thiocarboxylated MOCS2A into precursor Z to generate a dithiolene group. This is Molybdopterin synthase catalytic subunit from Oryza sativa subsp. indica (Rice).